The primary structure comprises 122 residues: MIQTETILEVADNSGARRVQCIKVLGGSHRRYASVGDIIKVSVKEAIPRGRVKKGDVMNAVVVRTKKGVRRPDGSVLRFDDNAAVLLNQNKAPIATRIFGPVTRELRGDQFMKIVSLAPEVL.

The protein belongs to the universal ribosomal protein uL14 family. Part of the 50S ribosomal subunit. Forms a cluster with proteins L3 and L19. In the 70S ribosome, L14 and L19 interact and together make contacts with the 16S rRNA in bridges B5 and B8.

In terms of biological role, binds to 23S rRNA. Forms part of two intersubunit bridges in the 70S ribosome. In Psychrobacter sp. (strain PRwf-1), this protein is Large ribosomal subunit protein uL14.